A 565-amino-acid polypeptide reads, in one-letter code: Ubiquitin carboxyl-terminal hydrolase 39 (565 aa).

Basic and acidic residues-rich tracts occupy residues 1 to 21 (MSGR…ESES) and 28 to 39 (VKRERDREREPE). Disordered regions lie at residues 1–61 (MSGR…SARE) and 75–96 (EREV…GRVD). S46 bears the Phosphoserine mark. Residue K51 forms a Glycyl lysine isopeptide (Lys-Gly) (interchain with G-Cter in SUMO2) linkage. S82 is subject to Phosphoserine. Over residues 85–96 (EREVRAKNGRVD) the composition is skewed to basic and acidic residues. Residues 103–200 (RHCPYLDTIN…YVLKPTFTKQ (98 aa)) form a UBP-type; degenerate zinc finger. Residues C136, C139, H155, and H161 each contribute to the Zn(2+) site. Residues 225–555 (VGLNNIKAND…EAYIQIWKRR (331 aa)) form the USP domain.

It belongs to the peptidase C19 family. As to quaternary structure, the U4/U6-U5 tri-snRNP complex is a building block of the precatalytic spliceosome (spliceosome B complex). Component of the U4/U6-U5 tri-snRNP complex composed of the U4, U6 and U5 snRNAs and at least PRPF3, PRPF4, PRPF6, PRPF8, PRPF31, SNRNP200, TXNL4A, SNRNP40, SNRPB, SNRPD1, SNRPD2, SNRPD3, SNRPE, SNRPF, SNRPG, DDX23, CD2BP2, PPIH, SNU13, EFTUD2, SART1 and USP39, plus LSM2, LSM3, LSM4, LSM5, LSM6, LSM7 and LSM8.

The protein resides in the nucleus. The enzyme catalyses Thiol-dependent hydrolysis of ester, thioester, amide, peptide and isopeptide bonds formed by the C-terminal Gly of ubiquitin (a 76-residue protein attached to proteins as an intracellular targeting signal).. Deubiquitinating enzyme that plays a role in many cellular processes including cellular antiviral response, epithelial morphogenesis, DNA repair or B-cell development. Plays a role in pre-mRNA splicing as a component of the U4/U6-U5 tri-snRNP, one of the building blocks of the precatalytic spliceosome. Specifically regulates immunoglobulin gene rearrangement in a spliceosome-dependent manner, which involves modulating chromatin interactions at the Igh locus and therefore plays an essential role in B-cell development. Regulates AURKB mRNA levels, and thereby plays a role in cytokinesis and in the spindle checkpoint. Regulates apoptosis and G2/M cell cycle checkpoint in response to DNA damage by deubiquitinating and stabilizing CHK2. Also plays an important role in DNA repair by controlling the recruitment of XRCC4/LIG4 to DNA double-strand breaks for non-homologous end-joining repair. Participates in antiviral activity by affecting the type I IFN signaling by stabilizing STAT1 and decreasing its 'Lys-6'-linked ubiquitination. Contributes to non-canonical Wnt signaling during epidermal differentiation. Acts as a negative regulator NF-kappa-B activation through deubiquitination of 'Lys-48'-linked ubiquitination of NFKBIA. The polypeptide is Ubiquitin carboxyl-terminal hydrolase 39 (USP39) (Pongo abelii (Sumatran orangutan)).